The sequence spans 383 residues: Multidrug resistance protein MexA (383 aa).

The first 23 residues, 1–23 (MQRTPAMRVLVPALLVAISALSG), serve as a signal peptide directing secretion. The N-palmitoyl cysteine moiety is linked to residue C24. C24 carries the S-diacylglycerol cysteine lipid modification. A coiled-coil region spans residues 97–151 (ATYEADYQSAQANLASTQEQAQRYKLLVADQAVSKQQYADANAAYLQSKAAVEQA).

This sequence belongs to the membrane fusion protein (MFP) (TC 8.A.1) family. As to quaternary structure, component of the MexAB-OprM multidrug efflux complex, composed of six MexA subunits forming a hexameric tube, binding to a MexB trimer, which interact with the trimeric OprM outer membrane channel protein. OprM is thought to not directly contact MexB; instead, MexA joins MexB and OprM by forming a funnel-like hexamer anchored to the inner membrane. MexA may initially form a hexameric ring complex with MexB prior to OprM, then OprM undergoes a conformational change as it contacts MexA, allowing the periplasmic gate to open. It is thought that, under high intracellular substrate concentration, MexB ejects substrate into the tunnel formed by MexA-OprM; as the substrate level declines, conformational changes in MexB cause efflux to reduce and stop and the complex shifts to the closed state. MexB subunit acts as a substrate:proton antiporter and activity is enhanced significantly when in complex with MexA and OprM, in vitro.

It is found in the cell inner membrane. With respect to regulation, export of antibiotics and solvents is dramatically decreased in the presence of the protonophore carbonyl cyanide m-chlorophenylhydrazone (CCCP), therefore may be driven by a proton gradient. Antibiotic efflux is inhibited by pyridopyrimidine derivatives, such as ABI-PP, acting by binding to a hydrophobic pocket in MexB. Functionally, the periplasmic linker component of the MexAB-OprM efflux system that confers multidrug resistance. Functions as the major efflux pump for n-hexane and p-xylene efflux. Has been shown in one study to be involved in the active efflux of the autoinducer N-(3-oxododecanoyl) homoserine lactone, thereby playing an indirect role in quorum-sensing; but has been shown in another study not to be involved in efflux of this autoinducer. Over-expression of the pump increases antibiotic and solvent efflux capacities. Implicated in the secretion of the siderophore pyoverdine. This chain is Multidrug resistance protein MexA (mexA), found in Pseudomonas aeruginosa (strain ATCC 15692 / DSM 22644 / CIP 104116 / JCM 14847 / LMG 12228 / 1C / PRS 101 / PAO1).